A 616-amino-acid polypeptide reads, in one-letter code: MAARINTSLHNALSFLKPFNTPLNTKPFSFRRNSFRFSKKLPYYSQFSSGKRALYCTSSSQESTVDEGETFVLTTPLYYVNAPPHMGSAYTTIAADSIARFQRLLGKKVIFITGTDEHGEKIATSAAANGRNPPEHCDLISQSYRTLWKDLDIAYDKFIRTTDPKHEAIVKEFYARVFANGDIYRADYEGLYCVNCEEYKDEKELLENNCCPVHQMPCVARKEDNYFFALSKYQKPLEDILAQNPRFVQPSYRLNEVQSWIKSGLRDFSISRALVDWGIPVPDDDKQTIYVWFDALLGYISALTEDNKQQNLETAVSFGWPASLHLIGKDILRFHAVYWPAMLMSAGLELPKMVFGHGFLTKDGMKMGKSLGNTLEPFELVQKFGPDAVRYFFLREVEFGNDGDYSEDRFIKIVNAHLANTIGNLLNRTLGLLKKNCESTLVVDSTVAAEGVPLKDTVEKLVEKARTNYENLSLSSACEAVLEIGNAGNTYMDQRAPWFLFKQGGVSAEEAAKDLVIILEVMRVIAVALSPVAPCLSLRIYSQLGYTEDQFNSITWSDTKWGGLKGGQVMEQASPVFARIELNPEKEEDEKKPKVGKKTGKAKVKVVEQTPTVAEA.

A 'HIGH' region motif is present at residues 78–88; that stretch reads YYVNAPPHMGS. Residues 366–370 carry the 'KMSKS' region motif; it reads KMGKS. K369 is an ATP binding site. Over residues 582–593 the composition is skewed to basic and acidic residues; it reads LNPEKEEDEKKP. Residues 582-602 are disordered; sequence LNPEKEEDEKKPKVGKKTGKA.

It belongs to the class-I aminoacyl-tRNA synthetase family.

It localises to the plastid. It is found in the chloroplast. Its subcellular location is the mitochondrion. It carries out the reaction tRNA(Met) + L-methionine + ATP = L-methionyl-tRNA(Met) + AMP + diphosphate. This chain is Methionine--tRNA ligase, chloroplastic/mitochondrial, found in Arabidopsis thaliana (Mouse-ear cress).